The primary structure comprises 192 residues: UPF0301 protein Bamb_0737 (192 aa).

The protein belongs to the UPF0301 (AlgH) family.

The chain is UPF0301 protein Bamb_0737 from Burkholderia ambifaria (strain ATCC BAA-244 / DSM 16087 / CCUG 44356 / LMG 19182 / AMMD) (Burkholderia cepacia (strain AMMD)).